We begin with the raw amino-acid sequence, 380 residues long: Enoyl-[acyl-carrier-protein] reductase, mitochondrial (380 aa).

The N-terminal 9 residues, 1–9 (MLPTFKRYM), are a transit peptide targeting the mitochondrion. The Proton donor role is filled by Y73. NADP(+) contacts are provided by residues N157, 185 to 188 (TSSV), 208 to 210 (RDR), 283 to 286 (YGGM), and 308 to 310 (YWV). S339 carries the phosphoserine modification. K373 lines the NADP(+) pocket.

It belongs to the zinc-containing alcohol dehydrogenase family. Quinone oxidoreductase subfamily. In terms of assembly, homodimer or in a complex with other proteins. Interacts with ARS1.

It localises to the mitochondrion matrix. The catalysed reaction is a 2,3-saturated acyl-[ACP] + NADP(+) = a (2E)-enoyl-[ACP] + NADPH + H(+). The enzyme catalyses (2E,4E)-hexadienoyl-CoA + NADPH + H(+) = (4E)-hexenoyl-CoA + NADP(+). It catalyses the reaction (2E)-hexenoyl-CoA + NADPH + H(+) = hexanoyl-CoA + NADP(+). Functionally, catalyzes the NADPH-dependent reduction of trans-2-enoyl thioesters in mitochondrial fatty acid synthesis (fatty acid synthesis type II). Fatty acid chain elongation in mitochondria uses acyl carrier protein (ACP) as an acyl group carrier, but the enzyme accepts both ACP and CoA thioesters as substrates in vitro. Required for respiration and the maintenance of the mitochondrial compartment. This is Enoyl-[acyl-carrier-protein] reductase, mitochondrial (ETR1) from Saccharomyces cerevisiae (strain ATCC 204508 / S288c) (Baker's yeast).